A 203-amino-acid chain; its full sequence is Glycerol-3-phosphate acyltransferase (203 aa).

5 helical membrane-spanning segments follow: residues 2–22, 54–74, 80–100, 114–134, and 153–173; these read LATLMFILAYLLGSISSAILV, CLVLIFDVLKGTIPVWGAYFL, ALGLVAVAACLGHMFPLFFGF, LPIGLSLAGLLICTWFIMVAI, and TWLIKPLYTLPVTFITVLIIF.

Belongs to the PlsY family. Probably interacts with PlsX.

It is found in the cell inner membrane. The catalysed reaction is an acyl phosphate + sn-glycerol 3-phosphate = a 1-acyl-sn-glycero-3-phosphate + phosphate. It functions in the pathway lipid metabolism; phospholipid metabolism. Its function is as follows. Catalyzes the transfer of an acyl group from acyl-phosphate (acyl-PO(4)) to glycerol-3-phosphate (G3P) to form lysophosphatidic acid (LPA). This enzyme utilizes acyl-phosphate as fatty acyl donor, but not acyl-CoA or acyl-ACP. This Pseudoalteromonas translucida (strain TAC 125) protein is Glycerol-3-phosphate acyltransferase.